Consider the following 557-residue polypeptide: Probable protein kinase UbiB (557 aa).

In terms of domain architecture, Protein kinase spans 121–509 (SFDTVPLASA…RKLQTRVVTA (389 aa)). ATP contacts are provided by residues 127–135 (LASASIAQV) and lysine 154. Aspartate 289 (proton acceptor) is an active-site residue. 2 helical membrane-spanning segments follow: residues 506-526 (VVTA…YGLH) and 535-555 (VPVW…VAWL).

Belongs to the ABC1 family. UbiB subfamily.

The protein localises to the cell inner membrane. Its pathway is cofactor biosynthesis; ubiquinone biosynthesis [regulation]. Functionally, is probably a protein kinase regulator of UbiI activity which is involved in aerobic coenzyme Q (ubiquinone) biosynthesis. The sequence is that of Probable protein kinase UbiB from Xanthomonas axonopodis pv. citri (strain 306).